The sequence spans 285 residues: Probable fructose-bisphosphate aldolase (285 aa).

Residue Ser50 coordinates D-glyceraldehyde 3-phosphate. The active-site Proton donor is the Asp85. Zn(2+) contacts are provided by His86, Asp107, Glu137, and His181. Gly182 serves as a coordination point for dihydroxyacetone phosphate. His209 is a Zn(2+) binding site. Dihydroxyacetone phosphate is bound by residues 210-212 (GGT) and 231-234 (NVNT). Thr212 and Thr234 each carry phosphothreonine.

It belongs to the class II fructose-bisphosphate aldolase family. The cofactor is Zn(2+). Phosphorylated during sporulation.

It carries out the reaction beta-D-fructose 1,6-bisphosphate = D-glyceraldehyde 3-phosphate + dihydroxyacetone phosphate. Its pathway is carbohydrate degradation; glycolysis; D-glyceraldehyde 3-phosphate and glycerone phosphate from D-glucose: step 4/4. Its function is as follows. Catalyzes the aldol condensation of dihydroxyacetone phosphate (DHAP or glycerone-phosphate) with glyceraldehyde 3-phosphate (G3P) to form fructose 1,6-bisphosphate (FBP) in gluconeogenesis and the reverse reaction in glycolysis. The protein is Probable fructose-bisphosphate aldolase (fbaA) of Bacillus subtilis (strain 168).